The following is a 437-amino-acid chain: Adenosylhomocysteinase (437 aa).

Residues threonine 54, aspartate 125, and glutamate 170 each contribute to the substrate site. 171–173 (TTT) contributes to the NAD(+) binding site. Substrate contacts are provided by lysine 200 and aspartate 204. Residues asparagine 205, 234–239 (GYGWVG), glutamate 258, asparagine 293, 314–316 (AGH), and asparagine 361 contribute to the NAD(+) site.

This sequence belongs to the adenosylhomocysteinase family. It depends on NAD(+) as a cofactor.

It is found in the cytoplasm. It catalyses the reaction S-adenosyl-L-homocysteine + H2O = L-homocysteine + adenosine. Its pathway is amino-acid biosynthesis; L-homocysteine biosynthesis; L-homocysteine from S-adenosyl-L-homocysteine: step 1/1. Functionally, may play a key role in the regulation of the intracellular concentration of adenosylhomocysteine. In Pyrobaculum aerophilum (strain ATCC 51768 / DSM 7523 / JCM 9630 / CIP 104966 / NBRC 100827 / IM2), this protein is Adenosylhomocysteinase.